The following is a 448-amino-acid chain: ATP-dependent protease ATPase subunit HslU (448 aa).

ATP-binding positions include Val21, 63–68 (GVGKTE), Asp260, Glu326, and Arg398.

Belongs to the ClpX chaperone family. HslU subfamily. As to quaternary structure, a double ring-shaped homohexamer of HslV is capped on each side by a ring-shaped HslU homohexamer. The assembly of the HslU/HslV complex is dependent on binding of ATP.

It is found in the cytoplasm. In terms of biological role, ATPase subunit of a proteasome-like degradation complex; this subunit has chaperone activity. The binding of ATP and its subsequent hydrolysis by HslU are essential for unfolding of protein substrates subsequently hydrolyzed by HslV. HslU recognizes the N-terminal part of its protein substrates and unfolds these before they are guided to HslV for hydrolysis. The polypeptide is ATP-dependent protease ATPase subunit HslU (Sulfurihydrogenibium sp. (strain YO3AOP1)).